The primary structure comprises 340 residues: Adenosine kinase (340 aa).

Asp293 is an active-site residue.

The protein belongs to the carbohydrate kinase PfkB family. In terms of assembly, monomer. The cofactor is Mg(2+).

It catalyses the reaction adenosine + ATP = AMP + ADP + H(+). The protein operates within purine metabolism; AMP biosynthesis via salvage pathway; AMP from adenosine: step 1/1. Functionally, ATP dependent phosphorylation of adenosine and other related nucleoside analogs to monophosphate derivatives. In Dictyostelium discoideum (Social amoeba), this protein is Adenosine kinase (adk).